Reading from the N-terminus, the 393-residue chain is tRNA(Met) cytidine acetate ligase (393 aa).

Residues Gly81, Asn142, and Arg167 each coordinate ATP.

The protein belongs to the TmcAL family.

The protein localises to the cytoplasm. It catalyses the reaction cytidine(34) in elongator tRNA(Met) + acetate + ATP = N(4)-acetylcytidine(34) in elongator tRNA(Met) + AMP + diphosphate. In terms of biological role, catalyzes the formation of N(4)-acetylcytidine (ac(4)C) at the wobble position of elongator tRNA(Met), using acetate and ATP as substrates. First activates an acetate ion to form acetyladenylate (Ac-AMP) and then transfers the acetyl group to tRNA to form ac(4)C34. The protein is tRNA(Met) cytidine acetate ligase of Bacillus thuringiensis subsp. konkukian (strain 97-27).